Here is a 316-residue protein sequence, read N- to C-terminus: N-acetyl-gamma-glutamyl-phosphate reductase (316 aa).

Cysteine 136 is a catalytic residue.

Belongs to the NAGSA dehydrogenase family. Type 1 subfamily.

It is found in the cytoplasm. The enzyme catalyses N-acetyl-L-glutamate 5-semialdehyde + phosphate + NADP(+) = N-acetyl-L-glutamyl 5-phosphate + NADPH + H(+). The protein operates within amino-acid biosynthesis; L-arginine biosynthesis; N(2)-acetyl-L-ornithine from L-glutamate: step 3/4. Catalyzes the NADPH-dependent reduction of N-acetyl-5-glutamyl phosphate to yield N-acetyl-L-glutamate 5-semialdehyde. This Xanthomonas campestris pv. campestris (strain B100) protein is N-acetyl-gamma-glutamyl-phosphate reductase.